A 351-amino-acid chain; its full sequence is Tropomodulin-2 (351 aa).

The residue at position 25 (Ser-25) is a Phosphoserine.

Belongs to the tropomodulin family. In terms of assembly, binds to the N-terminus of tropomyosin and to actin. In terms of tissue distribution, neuronal-tissue specific.

Its subcellular location is the cytoplasm. It is found in the cytoskeleton. Functionally, blocks the elongation and depolymerization of the actin filaments at the pointed end. The Tmod/TM complex contributes to the formation of the short actin protofilament, which in turn defines the geometry of the membrane skeleton. This Homo sapiens (Human) protein is Tropomodulin-2 (TMOD2).